Consider the following 455-residue polypeptide: Ectonucleoside triphosphate diphosphohydrolase 6 (455 aa).

Residues 1–12 (MRKIPNHGTLRM) are Cytoplasmic-facing. Residues 13–32 (TKVAYPLGLCVGLFIYVAYI) traverse the membrane as a helical segment. Over 33-455 (KWHRASAAQA…SLKRQKVPAL (423 aa)) the chain is Lumenal. The Proton acceptor role is filled by Glu196. Cystine bridges form between Cys297-Cys327 and Cys387-Cys401.

This sequence belongs to the GDA1/CD39 NTPase family. Mg(2+) serves as cofactor. Ca(2+) is required as a cofactor. Post-translationally, N-glycosylated.

It localises to the golgi apparatus membrane. The protein localises to the secreted. It is found in the cell membrane. The enzyme catalyses a ribonucleoside 5'-diphosphate + H2O = a ribonucleoside 5'-phosphate + phosphate + H(+). It carries out the reaction IDP + H2O = IMP + phosphate + H(+). It catalyses the reaction GDP + H2O = GMP + phosphate + H(+). The catalysed reaction is UDP + H2O = UMP + phosphate + H(+). Its function is as follows. Catalyzes the hydrolysis of nucleoside triphosphates and diphosphates in a calcium- or magnesium-dependent manner. Has a strong preference for nucleoside diphosphates, preferentially hydrolyzes GDP, IDP, and UDP, with slower hydrolysis of CDP, ITP, GTP, CTP, ADP, and UTP and virtually no hydrolysis of ATP. The membrane bound form might support glycosylation reactions in the Golgi apparatus and, when released from cells, might catalyze the hydrolysis of extracellular nucleotides. The chain is Ectonucleoside triphosphate diphosphohydrolase 6 from Mus musculus (Mouse).